A 445-amino-acid chain; its full sequence is 4-hydroxyphenylpyruvate dioxygenase (445 aa).

A compositionally biased stretch (polar residues) spans 1–11 (MGHQNAAVSEN). Residues 1-20 (MGHQNAAVSENQNHDDGAAS) are disordered. VOC domains are found at residues 46–192 (RFHH…YVSY) and 223–383 (RLDH…IFTK). The Fe cation site is built by His226, His308, and Glu394.

It belongs to the 4HPPD family. As to quaternary structure, homodimer. It depends on Fe cation as a cofactor.

It localises to the cytoplasm. It carries out the reaction 3-(4-hydroxyphenyl)pyruvate + O2 = homogentisate + CO2. Its pathway is amino-acid degradation; L-phenylalanine degradation; acetoacetate and fumarate from L-phenylalanine: step 3/6. It participates in cofactor biosynthesis; prenylquinone biosynthesis. Functionally, catalyzes the conversion of 4-hydroxyphenylpyruvic acid to homogentisic acid, one of the steps in tyrosine catabolism. The chain is 4-hydroxyphenylpyruvate dioxygenase (HPD) from Arabidopsis thaliana (Mouse-ear cress).